Consider the following 98-residue polypeptide: Elicitin Vex1 (98 aa).

Cystine bridges form between Cys3–Cys71, Cys27–Cys56, and Cys51–Cys95. Asn92 is a glycosylation site (N-linked (GlcNAc...) asparagine).

The protein belongs to the elicitin family.

It is found in the secreted. Its function is as follows. Induces local and distal defense responses (incompatible hypersensitive reaction) in plants from the solanaceae and cruciferae families. Elicits leaf necrosis and causes the accumulation of pathogenesis-related proteins. Might interact with the lipidic molecules of the plasma membrane. In Phytopythium vexans (Damping-off fungus), this protein is Elicitin Vex1.